Here is a 311-residue protein sequence, read N- to C-terminus: Aspartate carbamoyltransferase catalytic subunit (311 aa).

Carbamoyl phosphate-binding residues include Arg55 and Thr56. Residue Lys85 coordinates L-aspartate. The carbamoyl phosphate site is built by Arg106, His135, and Gln138. Arg168 and Arg230 together coordinate L-aspartate. Residues Leu268 and Pro269 each contribute to the carbamoyl phosphate site.

This sequence belongs to the aspartate/ornithine carbamoyltransferase superfamily. ATCase family. As to quaternary structure, heterododecamer (2C3:3R2) of six catalytic PyrB chains organized as two trimers (C3), and six regulatory PyrI chains organized as three dimers (R2).

It carries out the reaction carbamoyl phosphate + L-aspartate = N-carbamoyl-L-aspartate + phosphate + H(+). The protein operates within pyrimidine metabolism; UMP biosynthesis via de novo pathway; (S)-dihydroorotate from bicarbonate: step 2/3. Catalyzes the condensation of carbamoyl phosphate and aspartate to form carbamoyl aspartate and inorganic phosphate, the committed step in the de novo pyrimidine nucleotide biosynthesis pathway. The chain is Aspartate carbamoyltransferase catalytic subunit from Yersinia pseudotuberculosis serotype O:1b (strain IP 31758).